Consider the following 1241-residue polypeptide: ATP-dependent helicase/nuclease subunit A (1241 aa).

The UvrD-like helicase ATP-binding domain occupies 12 to 485 (SQWTDDQWKA…IDLAKNFRSR (474 aa)). 33-40 (AAAGSGKT) serves as a coordination point for ATP. A UvrD-like helicase C-terminal domain is found at 505–805 (GEIDYDADAE…RIMTIHKSKG (301 aa)).

It belongs to the helicase family. AddA subfamily. Heterodimer of AddA and AddB/RexB. Mg(2+) serves as cofactor.

It catalyses the reaction Couples ATP hydrolysis with the unwinding of duplex DNA by translocating in the 3'-5' direction.. The catalysed reaction is ATP + H2O = ADP + phosphate + H(+). Functionally, the heterodimer acts as both an ATP-dependent DNA helicase and an ATP-dependent, dual-direction single-stranded exonuclease. Recognizes the chi site generating a DNA molecule suitable for the initiation of homologous recombination. The AddA nuclease domain is required for chi fragment generation; this subunit has the helicase and 3' -&gt; 5' nuclease activities. This is ATP-dependent helicase/nuclease subunit A from Bacillus cereus (strain ZK / E33L).